The sequence spans 181 residues: Cytochrome b6-f complex iron-sulfur subunit (181 aa).

The tract at residues 1-35 is disordered; the sequence is MAQTGNFKSPARMSSLGQGAAPASAGAVTGGKPRE. 2 helical membrane passes run 53–73 and 114–134; these read VGGV…RYIV and GGSL…VHWD. Residues 85–178 enclose the Rieske domain; the sequence is LAVGPASDVP…VKIEDGKIVV (94 aa). Cysteine 124, histidine 126, cysteine 142, and histidine 145 together coordinate [2Fe-2S] cluster. A disulfide bond links cysteine 129 and cysteine 144.

It belongs to the Rieske iron-sulfur protein family. It depends on [2Fe-2S] cluster as a cofactor.

It localises to the cell inner membrane. The enzyme catalyses 2 oxidized [plastocyanin] + a plastoquinol + 2 H(+)(in) = 2 reduced [plastocyanin] + a plastoquinone + 4 H(+)(out). Functionally, component of the green S-bacteria bc-complex which consists of the Rieske protein and cytochrome b subunit and which appears to lack a cytochrome c1-equivalent. This complex has a comparatively low redox potential. The polypeptide is Cytochrome b6-f complex iron-sulfur subunit (petC) (Chlorobaculum tepidum (strain ATCC 49652 / DSM 12025 / NBRC 103806 / TLS) (Chlorobium tepidum)).